We begin with the raw amino-acid sequence, 308 residues long: HPr kinase/phosphorylase (308 aa).

Residues His138 and Lys159 contribute to the active site. 153 to 160 is a binding site for ATP; it reads GESGLGKS. Residue Ser160 coordinates Mg(2+). Asp177 functions as the Proton acceptor; for phosphorylation activity. Proton donor; for dephosphorylation activity in the catalytic mechanism. The interval 201 to 210 is important for the catalytic mechanism of both phosphorylation and dephosphorylation; sequence LEVRGLGLLD. Glu202 provides a ligand contact to Mg(2+). The active site involves Arg243. The important for the catalytic mechanism of dephosphorylation stretch occupies residues 264–269; that stretch reads QVAAGR.

The protein belongs to the HPrK/P family. Homohexamer. Mg(2+) is required as a cofactor.

It carries out the reaction [HPr protein]-L-serine + ATP = [HPr protein]-O-phospho-L-serine + ADP + H(+). It catalyses the reaction [HPr protein]-O-phospho-L-serine + phosphate + H(+) = [HPr protein]-L-serine + diphosphate. In terms of biological role, catalyzes the ATP- as well as the pyrophosphate-dependent phosphorylation of a specific serine residue in HPr, a phosphocarrier protein of the phosphoenolpyruvate-dependent sugar phosphotransferase system (PTS). HprK/P also catalyzes the pyrophosphate-producing, inorganic phosphate-dependent dephosphorylation (phosphorolysis) of seryl-phosphorylated HPr (P-Ser-HPr). The sequence is that of HPr kinase/phosphorylase from Bordetella pertussis (strain Tohama I / ATCC BAA-589 / NCTC 13251).